A 203-amino-acid chain; its full sequence is Probable NADPH:quinone oxidoreductase 2 (203 aa).

The protein belongs to the SsuE family. Homotetramer. Requires FMN as cofactor.

It carries out the reaction a quinone + NADH + H(+) = a quinol + NAD(+). The catalysed reaction is a quinone + NADPH + H(+) = a quinol + NADP(+). Its function is as follows. The enzyme apparently serves as a quinone reductase in connection with conjugation reactions of hydroquinones involved in detoxification pathways. In Oryza sativa subsp. japonica (Rice), this protein is Probable NADPH:quinone oxidoreductase 2.